The sequence spans 153 residues: MNVGTAHSEVNPNTRVMNSRGIWLSYVLAIGLLHVVLLSIPFVSVPVVWTLTNLIHNLGMYIFLHTVKGTPFETPDQGKARLLTHWEQMDYGVQFTASRKFLTITPIVLYFLTSFYTKYDQVHFILNTVSLMTVLIPKLPQLHGVRIFGINKY.

The interval Met1–Met17 is important for ceramide level-sensing. The Cytoplasmic portion of the chain corresponds to Met1–Gly21. A run of 2 helical transmembrane segments spans residues Ile22–Phe42 and Val43–Phe63. At Leu64–Gln94 the chain is on the cytoplasmic side. The chain crosses the membrane as a helical span at residues Phe95–Thr117. Over Lys118–Gln121 the chain is Extracellular. The chain crosses the membrane as a helical span at residues Val122–Leu142. Pro137 is subject to Hydroxyproline. Over His143–Tyr153 the chain is Cytoplasmic.

The protein belongs to the ORM family. As to quaternary structure, ceramide-sensitive subunit of the serine palmitoyltransferase (SPT) complex, which is also composed of SPTLC1, SPTLC2/3 and SPTSSA/B. Post-translationally, when hydroxylated at Pro-137, ubiquitinated via 'Lys-48'-linkage, leading to proteasomal degradation. In endothelial cells, ORMDL3 proteasomal degradation is controlled by the sphingosine 1-phosphate receptor signaling pathway.

It localises to the endoplasmic reticulum membrane. Its function is as follows. Plays an essential role in the homeostatic regulation of sphingolipid de novo biosynthesis by modulating the activity of the serine palmitoyltransferase (SPT) in response to ceramide levels. When complexed to SPT, the binding of ceramides to its N-terminus stabilizes a conformation that block SPT substrate entry, hence preventing SPT catalytic activity. Through this mechanism, maintains ceramide levels at sufficient concentrations for the production of complex sphingolipids, but which prevents the accumulation of ceramides to levels that trigger apoptosis. The sequence is that of ORM1-like protein 3 (Ormdl3) from Mus musculus (Mouse).